Reading from the N-terminus, the 473-residue chain is Spliceosome-associated protein CWC27 homolog (473 aa).

An N-acetylserine modification is found at Ser-2. In terms of domain architecture, PPIase cyclophilin-type spans 11-166; that stretch reads TNGKVLLKTT…NSHKIRSCEV (156 aa). Basic and acidic residues predominate over residues 178–193; that stretch reads EIKKPKKEKPEEEVKK. Disordered regions lie at residues 178–197, 203–383, and 401–473; these read EIKK…LKPK, SLLS…TSRE, and IAET…KERR. A coiled-coil region spans residues 206-230; it reads SFGEEAEEEEEEVNRVSQSMKGKSK. The span at 231-241 shows a compositional bias: basic and acidic residues; sequence SSHDLLKDDPH. The short motif at 252 to 254 is the Cell attachment site element; it reads RGD. Acidic residues predominate over residues 256 to 266; that stretch reads AEDSDDDGEYE. Basic and acidic residues-rich tracts occupy residues 267-348 and 360-372; these read GAEH…KRSE and EYRR…EALR. Residues 311–378 are a coiled coil; that stretch reads VSRSEELRKE…EALRKQQAKT (68 aa). Ser-347 is subject to Phosphoserine. A compositionally biased stretch (acidic residues) spans 405–419; it reads PENDISETEVEDDEG. 2 stretches are compositionally biased toward basic and acidic residues: residues 426 to 438 and 458 to 473; these read QFED…KDAS and RREE…KERR.

This sequence belongs to the cyclophilin-type PPIase family. Part of the activated spliceosome B/catalytic step 1 spliceosome, one of the forms of the spliceosome which has a well-formed active site but still cannot catalyze the branching reaction and is composed at least of 52 proteins, the U2, U5 and U6 snRNAs and the pre-mRNA. Recruited during early steps of activated spliceosome B maturation, it is probably one of the first proteins released from this complex as he matures to the spliceosome C complex. Component of the minor spliceosome, which splices U12-type introns.

It localises to the nucleus. As part of the spliceosome, plays a role in pre-mRNA splicing. Probable inactive PPIase with no peptidyl-prolyl cis-trans isomerase activity. As a component of the minor spliceosome, involved in the splicing of U12-type introns in pre-mRNAs. The protein is Spliceosome-associated protein CWC27 homolog of Bos taurus (Bovine).